Here is a 424-residue protein sequence, read N- to C-terminus: L-glutamine:2-deoxy-scyllo-inosose aminotransferase (424 aa).

An N6-(pyridoxal phosphate)lysine modification is found at lysine 202.

Belongs to the DegT/DnrJ/EryC1 family. L-glutamine:2-deoxy-scyllo-inosose/scyllo-inosose aminotransferase subfamily. Requires pyridoxal 5'-phosphate as cofactor.

It catalyses the reaction 2-deoxy-L-scyllo-inosose + L-glutamine = 2-deoxy-scyllo-inosamine + 2-oxoglutaramate. The catalysed reaction is 3-amino-2,3-dideoxy-scyllo-inosose + L-glutamine = 2-deoxystreptamine + 2-oxoglutaramate. It functions in the pathway metabolic intermediate biosynthesis; 2-deoxystreptamine biosynthesis; 2-deoxystreptamine from D-glucose 6-phosphate: step 2/4. Its pathway is antibiotic biosynthesis; lividomycin biosynthesis. Catalyzes the PLP-dependent transamination of 2-deoxy-scyllo-inosose (2-DOI) to form 2-deoxy-scyllo-inosamine (2-DOIA) using L-glutamine as the amino donor. Also catalyzes the transamination of 3-amino-2,3-dideoxy-scyllo-inosose (keto-2-DOIA) into 2-deoxystreptamine (2-DOS). In Streptomyces lividus, this protein is L-glutamine:2-deoxy-scyllo-inosose aminotransferase (livS).